Consider the following 480-residue polypeptide: UDP-glucose 6-dehydrogenase 3 (480 aa).

NAD(+)-binding positions include 8–13 (GAGYVG), Asp33, Arg38, 86–90 (VNTPT), 127–128 (ST), and Glu161. Residues 157–161 (EFLAE), 216–223 (KLAANAFL), and 256–269 (RIGP…VGFG) contribute to the substrate site. Cys272 acts as the Nucleophile in catalysis. 272 to 275 (CFQK) contributes to the NAD(+) binding site. Substrate is bound at residue 334 to 335 (FK). Arg342 serves as a coordination point for NAD(+). At Ser393 the chain carries Phosphoserine. Residue Arg447 participates in substrate binding.

The protein belongs to the UDP-glucose/GDP-mannose dehydrogenase family.

It catalyses the reaction UDP-alpha-D-glucose + 2 NAD(+) + H2O = UDP-alpha-D-glucuronate + 2 NADH + 3 H(+). The protein operates within nucleotide-sugar biosynthesis; UDP-alpha-D-glucuronate biosynthesis; UDP-alpha-D-glucuronate from UDP-alpha-D-glucose: step 1/1. Involved in the biosynthesis of UDP-glucuronic acid (UDP-GlcA), providing nucleotide sugars for cell-wall polymers. This chain is UDP-glucose 6-dehydrogenase 3 (UGD3), found in Oryza sativa subsp. japonica (Rice).